Consider the following 484-residue polypeptide: Protein nucleotidyltransferase YdiU (484 aa).

Positions 81, 83, 84, 103, 115, 116, 166, and 173 each coordinate ATP. Asp-244 (proton acceptor) is an active-site residue. Mg(2+) is bound by residues Asn-245 and Asp-254. Asp-254 contributes to the ATP binding site.

This sequence belongs to the SELO family. Mg(2+) serves as cofactor. The cofactor is Mn(2+).

The enzyme catalyses L-seryl-[protein] + ATP = 3-O-(5'-adenylyl)-L-seryl-[protein] + diphosphate. It carries out the reaction L-threonyl-[protein] + ATP = 3-O-(5'-adenylyl)-L-threonyl-[protein] + diphosphate. The catalysed reaction is L-tyrosyl-[protein] + ATP = O-(5'-adenylyl)-L-tyrosyl-[protein] + diphosphate. It catalyses the reaction L-histidyl-[protein] + UTP = N(tele)-(5'-uridylyl)-L-histidyl-[protein] + diphosphate. The enzyme catalyses L-seryl-[protein] + UTP = O-(5'-uridylyl)-L-seryl-[protein] + diphosphate. It carries out the reaction L-tyrosyl-[protein] + UTP = O-(5'-uridylyl)-L-tyrosyl-[protein] + diphosphate. Nucleotidyltransferase involved in the post-translational modification of proteins. It can catalyze the addition of adenosine monophosphate (AMP) or uridine monophosphate (UMP) to a protein, resulting in modifications known as AMPylation and UMPylation. The chain is Protein nucleotidyltransferase YdiU from Shewanella oneidensis (strain ATCC 700550 / JCM 31522 / CIP 106686 / LMG 19005 / NCIMB 14063 / MR-1).